We begin with the raw amino-acid sequence, 596 residues long: Elongation factor 4 (596 aa).

Positions 2 to 184 (KHIRNFSIIA…VIVAKIPPPE (183 aa)) constitute a tr-type G domain. GTP is bound by residues 14 to 19 (DHGKST) and 131 to 134 (NKID).

Belongs to the TRAFAC class translation factor GTPase superfamily. Classic translation factor GTPase family. LepA subfamily.

It is found in the cell inner membrane. The enzyme catalyses GTP + H2O = GDP + phosphate + H(+). Functionally, required for accurate and efficient protein synthesis under certain stress conditions. May act as a fidelity factor of the translation reaction, by catalyzing a one-codon backward translocation of tRNAs on improperly translocated ribosomes. Back-translocation proceeds from a post-translocation (POST) complex to a pre-translocation (PRE) complex, thus giving elongation factor G a second chance to translocate the tRNAs correctly. Binds to ribosomes in a GTP-dependent manner. The chain is Elongation factor 4 from Shewanella putrefaciens (strain CN-32 / ATCC BAA-453).